The sequence spans 320 residues: uncharacterized protein (320 aa).

46-53 (DVPGVGKT) contributes to the ATP binding site.

This sequence belongs to the MoxR family.

This is an uncharacterized protein from Bacillus subtilis (strain 168).